A 716-amino-acid chain; its full sequence is Forkhead box protein P2 (716 aa).

A compositionally biased stretch (polar residues) spans 1 to 28 (MMQESATETISNSSMNQNGMSTLSSQLD). Disordered regions lie at residues 1–45 (MMQE…SEVS) and 286–340 (KHGG…TGAS). The span at 293–306 (TTNNSSSTTSSTTS) shows a compositional bias: low complexity. A compositionally biased stretch (polar residues) spans 316-325 (SIVNGQSSVL). Over residues 327–338 (ARRDSSSHEETG) the composition is skewed to basic and acidic residues. Residues 347–372 (GVCKWPGCESICEDFGQFLKHLNNEH) form a C2H2-type zinc finger. The segment at 389–410 (VQQLEIQLSKERERLQAMMTHL) is leucine-zipper. Positions 423–427 (PLNLV) are CTBP1-binding. The segment covering 439–460 (TSPQSLPQTPTTPTAPVTPITQ) has biased composition (low complexity). Positions 439–466 (TSPQSLPQTPTTPTAPVTPITQGPSVIT) are disordered. Residues 505–595 (RPPFTYATLI…SQKITGSPTL (91 aa)) constitute a DNA-binding region (fork-head). Disordered regions lie at residues 650 to 669 (LDHI…QPHI) and 679 to 716 (VIAE…EDLE). Over residues 700–716 (LEDDREIEEEPLSEDLE) the composition is skewed to acidic residues.

As to quaternary structure, forms homodimers and heterodimers with FOXP1 and FOXP4. Dimerization is required for DNA-binding. Interacts with CTBP1. Interacts with FOXP1. Interacts with TBR1. Interacts with ZMYM2.

Its subcellular location is the nucleus. Transcriptional repressor that may play a role in the specification and differentiation of lung epithelium. May also play a role in developing neural, gastrointestinal and cardiovascular tissues. Can act with CTBP1 to synergistically repress transcription but CTPBP1 is not essential. Plays a role in synapse formation by regulating SRPX2 levels. This is Forkhead box protein P2 (FOXP2) from Pan paniscus (Pygmy chimpanzee).